The primary structure comprises 135 residues: Ribosome-binding factor A (135 aa).

The protein belongs to the RbfA family. Monomer. Binds 30S ribosomal subunits, but not 50S ribosomal subunits or 70S ribosomes.

Its subcellular location is the cytoplasm. Its function is as follows. One of several proteins that assist in the late maturation steps of the functional core of the 30S ribosomal subunit. Associates with free 30S ribosomal subunits (but not with 30S subunits that are part of 70S ribosomes or polysomes). Required for efficient processing of 16S rRNA. May interact with the 5'-terminal helix region of 16S rRNA. In Novosphingobium aromaticivorans (strain ATCC 700278 / DSM 12444 / CCUG 56034 / CIP 105152 / NBRC 16084 / F199), this protein is Ribosome-binding factor A.